We begin with the raw amino-acid sequence, 142 residues long: Dynein light chain Tctex-type protein 2B (142 aa).

This sequence belongs to the dynein light chain Tctex-type family. As to quaternary structure, light chain of the cytoplasmic dynein complex 2, a multisubunit complex composed at least of eleven different proteins. The cytoplasmic dynein 2 complex consists of two catalytic heavy chains (HCs) and a number of non-catalytic subunits presented by intermediate chains (ICs), light intermediate chains (LICs) and light chains (LCs). Among them, a heavy chain (DYNC2H1), two intermediate chains (DYNC2I2 and DYNC2I1), a light intermediate chain (DYNC2LI1), and a light chain (DYNLT2B) are unique to the dynein-2 complex, but a subset of the light chains are also shared by dynein-1 and dynein-2 complexes. Interacts with DYNC2I1. The dimer DYNLT2B-DYNLT1/DYNLT3 interacts with DYNC2I1; this interaction is crucial for retrograde trafficking of ciliary proteins.

It is found in the dynein axonemal particle. Acts as one of several non-catalytic accessory components of the cytoplasmic dynein 2 complex (dynein-2 complex), a motor protein complex that drives the movement of cargos along microtubules within cilia and flagella in concert with the intraflagellar transport (IFT) system. Required for proper retrograde ciliary transport. This Homo sapiens (Human) protein is Dynein light chain Tctex-type protein 2B.